Reading from the N-terminus, the 278-residue chain is Large ribosomal subunit protein uL2 (278 aa).

2 stretches are compositionally biased toward basic residues: residues Arg210–Gln219 and Lys252–Lys263. The tract at residues Arg210 to Lys278 is disordered.

This sequence belongs to the universal ribosomal protein uL2 family. Part of the 50S ribosomal subunit. Forms a bridge to the 30S subunit in the 70S ribosome.

In terms of biological role, one of the primary rRNA binding proteins. Required for association of the 30S and 50S subunits to form the 70S ribosome, for tRNA binding and peptide bond formation. It has been suggested to have peptidyltransferase activity; this is somewhat controversial. Makes several contacts with the 16S rRNA in the 70S ribosome. The chain is Large ribosomal subunit protein uL2 from Lactobacillus gasseri (strain ATCC 33323 / DSM 20243 / BCRC 14619 / CIP 102991 / JCM 1131 / KCTC 3163 / NCIMB 11718 / NCTC 13722 / AM63).